The primary structure comprises 71 residues: Conotoxin PnMEKL-032 (71 aa).

An N-terminal signal peptide occupies residues Met-1 to Ala-19. Residues Leu-20–Arg-46 constitute a propeptide that is removed on maturation. Cystine bridges form between Cys-48/Cys-62, Cys-55/Cys-66, and Cys-61/Cys-70.

It belongs to the conotoxin O2 superfamily. Expressed by the venom duct.

The protein localises to the secreted. This Conus pennaceus (Feathered cone) protein is Conotoxin PnMEKL-032.